Here is a 901-residue protein sequence, read N- to C-terminus: Alanine--tRNA ligase (901 aa).

Zn(2+)-binding residues include H581, H585, C684, and H688.

The protein belongs to the class-II aminoacyl-tRNA synthetase family. Requires Zn(2+) as cofactor.

The protein localises to the cytoplasm. The catalysed reaction is tRNA(Ala) + L-alanine + ATP = L-alanyl-tRNA(Ala) + AMP + diphosphate. In terms of biological role, catalyzes the attachment of alanine to tRNA(Ala) in a two-step reaction: alanine is first activated by ATP to form Ala-AMP and then transferred to the acceptor end of tRNA(Ala). Also edits incorrectly charged Ser-tRNA(Ala) and Gly-tRNA(Ala) via its editing domain. In Mycobacterium marinum (strain ATCC BAA-535 / M), this protein is Alanine--tRNA ligase.